Consider the following 128-residue polypeptide: 3-aminoacrylate deaminase RutC (128 aa).

The protein belongs to the RutC family. As to quaternary structure, homotrimer.

It carries out the reaction (Z)-3-aminoacrylate + H2O + H(+) = 3-oxopropanoate + NH4(+). In terms of biological role, involved in pyrimidine catabolism. Catalyzes the deamination of 3-aminoacrylate to malonic semialdehyde, a reaction that can also occur spontaneously. RutC may facilitate the reaction and modulate the metabolic fitness, rather than catalyzing essential functions. The sequence is that of 3-aminoacrylate deaminase RutC from Escherichia coli O111:H- (strain 11128 / EHEC).